Here is a 285-residue protein sequence, read N- to C-terminus: Pantothenate synthetase (285 aa).

30-37 (MGNLHAGH) contributes to the ATP binding site. His-37 (proton donor) is an active-site residue. Residue Gln-61 participates in (R)-pantoate binding. Gln-61 provides a ligand contact to beta-alanine. 149-152 (GEKD) contributes to the ATP binding site. Gln-155 is a (R)-pantoate binding site. Position 186–189 (186–189 (LSSR)) interacts with ATP.

It belongs to the pantothenate synthetase family. As to quaternary structure, homodimer.

The protein localises to the cytoplasm. It catalyses the reaction (R)-pantoate + beta-alanine + ATP = (R)-pantothenate + AMP + diphosphate + H(+). It participates in cofactor biosynthesis; (R)-pantothenate biosynthesis; (R)-pantothenate from (R)-pantoate and beta-alanine: step 1/1. Functionally, catalyzes the condensation of pantoate with beta-alanine in an ATP-dependent reaction via a pantoyl-adenylate intermediate. The chain is Pantothenate synthetase from Ectopseudomonas mendocina (strain ymp) (Pseudomonas mendocina).